Here is a 364-residue protein sequence, read N- to C-terminus: tRNA 2-selenouridine synthase (364 aa).

The region spanning 14–137 (LIADTPIIDV…LRQTAIQATI (124 aa)) is the Rhodanese domain. C97 functions as the S-selanylcysteine intermediate in the catalytic mechanism.

The protein belongs to the SelU family. As to quaternary structure, monomer.

It catalyses the reaction 5-methylaminomethyl-2-thiouridine(34) in tRNA + selenophosphate + (2E)-geranyl diphosphate + H2O + H(+) = 5-methylaminomethyl-2-selenouridine(34) in tRNA + (2E)-thiogeraniol + phosphate + diphosphate. It carries out the reaction 5-methylaminomethyl-2-thiouridine(34) in tRNA + (2E)-geranyl diphosphate = 5-methylaminomethyl-S-(2E)-geranyl-thiouridine(34) in tRNA + diphosphate. The enzyme catalyses 5-methylaminomethyl-S-(2E)-geranyl-thiouridine(34) in tRNA + selenophosphate + H(+) = 5-methylaminomethyl-2-(Se-phospho)selenouridine(34) in tRNA + (2E)-thiogeraniol. The catalysed reaction is 5-methylaminomethyl-2-(Se-phospho)selenouridine(34) in tRNA + H2O = 5-methylaminomethyl-2-selenouridine(34) in tRNA + phosphate. Involved in the post-transcriptional modification of the uridine at the wobble position (U34) of tRNA(Lys), tRNA(Glu) and tRNA(Gln). Catalyzes the conversion of 2-thiouridine (S2U-RNA) to 2-selenouridine (Se2U-RNA). Acts in a two-step process involving geranylation of 2-thiouridine (S2U) to S-geranyl-2-thiouridine (geS2U) and subsequent selenation of the latter derivative to 2-selenouridine (Se2U) in the tRNA chain. In Escherichia coli O127:H6 (strain E2348/69 / EPEC), this protein is tRNA 2-selenouridine synthase.